The chain runs to 477 residues: Ribulose bisphosphate carboxylase large chain (477 aa).

Residues Met1–Ser2 constitute a propeptide that is removed on maturation. N-acetylproline is present on Pro3. Substrate contacts are provided by Asn123 and Thr173. Residue Lys175 is the Proton acceptor of the active site. Lys177 serves as a coordination point for substrate. Mg(2+) contacts are provided by Lys201, Asp203, and Glu204. Lys201 bears the N6-carboxylysine mark. Catalysis depends on His294, which acts as the Proton acceptor. Substrate is bound by residues Arg295, His327, and Ser379.

Belongs to the RuBisCO large chain family. Type I subfamily. As to quaternary structure, heterohexadecamer of 8 large chains and 8 small chains; disulfide-linked. The disulfide link is formed within the large subunit homodimers. Mg(2+) serves as cofactor. Post-translationally, the disulfide bond which can form in the large chain dimeric partners within the hexadecamer appears to be associated with oxidative stress and protein turnover.

It is found in the plastid. The protein localises to the chloroplast. The catalysed reaction is 2 (2R)-3-phosphoglycerate + 2 H(+) = D-ribulose 1,5-bisphosphate + CO2 + H2O. It carries out the reaction D-ribulose 1,5-bisphosphate + O2 = 2-phosphoglycolate + (2R)-3-phosphoglycerate + 2 H(+). RuBisCO catalyzes two reactions: the carboxylation of D-ribulose 1,5-bisphosphate, the primary event in carbon dioxide fixation, as well as the oxidative fragmentation of the pentose substrate in the photorespiration process. Both reactions occur simultaneously and in competition at the same active site. The protein is Ribulose bisphosphate carboxylase large chain of Lolium perenne (Perennial ryegrass).